Reading from the N-terminus, the 298-residue chain is Probable deoxyhypusine synthase 2 (298 aa).

Lysine 259 (nucleophile) is an active-site residue.

It belongs to the deoxyhypusine synthase family. NAD(+) is required as a cofactor.

The enzyme catalyses [eIF5A protein]-L-lysine + spermidine = [eIF5A protein]-deoxyhypusine + propane-1,3-diamine. The protein operates within protein modification; eIF5A hypusination. Functionally, catalyzes the NAD-dependent oxidative cleavage of spermidine and the subsequent transfer of the butylamine moiety of spermidine to the epsilon-amino group of a specific lysine residue of the eIF-5A precursor protein to form the intermediate deoxyhypusine residue. The sequence is that of Probable deoxyhypusine synthase 2 (dys2) from Archaeoglobus fulgidus (strain ATCC 49558 / DSM 4304 / JCM 9628 / NBRC 100126 / VC-16).